The sequence spans 3289 residues: tRNA nuclease CdiA (3289 aa).

The N-terminal stretch at 1 to 32 is a signal peptide; sequence MHQPPVRFTYRLLSYLISTIIAGQPLLPAVGA. The tract at residues 36–322 is two-partner system transport domain (TPS); that stretch reads PQNGAGMDKA…AGGNLSVSSR (287 aa). The tract at residues 351-1398 is FHA-1; it reads EKLTAGRDVT…IVVRTGHLLN (1048 aa). The interval 595–615 is disordered; that stretch reads AVNASEKLTHSGKSSAPSLSL. The interval 1399–1689 is receptor binding domain (RBD); sequence QREGFSATTT…LTGQTGISDD (291 aa). Residues 1690-1874 form a YP domain region; it reads WPLPSGNNGY…LSPEDITLHN (185 aa). A periplasmic FHA-1 repeat (pFR) region spans residues 1875–1935; it reads GSVISGNNVQ…DLSAIGDISN (61 aa). The segment at 1979–2653 is FHA-2; the sequence is TDTGPVATIK…TSKYDSKQTS (675 aa). Residues 2097–2113 are compositionally biased toward basic and acidic residues; it reads RESKNSRNGRSESHESH. 3 disordered regions span residues 2097 to 2116, 2332 to 2356, and 2466 to 2513; these read RESK…HAAV, GSSK…TIGS, and TGDP…TGKN. Polar residues-rich tracts occupy residues 2344-2356 and 2472-2507; these read GTTQ…TIGS and TGVS…NLSV. Residues 2992-3034 form a pretoxin (PT) domain region; the sequence is SDLSEEQKQTISTLATVSAGLAGGLTGNSTASAAVGAQSGKNA. The VENN CT cleavage motif signature appears at 3035-3038; it reads VENN. Residues 3035 to 3289 form a C-terminal effector domain (CT); has tRNase activity region; the sequence is VENNYLSVSE…VGHIQPVKVK (255 aa). An inner membrane translocation domain (IMTD), targets protein to PtsG region spans residues 3039–3197; the sequence is YLSVSEKTEL…PLIGQAASNK (159 aa).

The protein in the N-terminal section; belongs to the CdiA toxin family. Forms a contact-dependent growth inhibition complex of CdiA-CT-NC101, CdiI-NC101 and EF-Tu; the complex is a dimer of heterotrimers. Stable CdiA-CT-NC101, EF-Tu complexes are not detected, nor are complexes with EF-Ts.

It is found in the secreted. The protein localises to the target cell. Its subcellular location is the target cell cytoplasm. Toxic component of a toxin-immunity protein module, which functions as a cellular contact-dependent growth inhibition (CDI) system. CDI modules allow bacteria to communicate with and inhibit the growth of closely related neighboring bacteria in a contact-dependent fashion (target cell counts decrease about 10,0000-fold for this system). CdiA toxicity is neutralized by its cognate immunity protein CdiI-NC101, but not by CdiI from other bacteria. The C-terminal domain (CT) cleaves tRNA endonucleolytically at the 5' side of guanine discriminator nucleotide sites (removes the last 4 nucleotides of the tRNA acceptor arm when the first nucleotide to be removed is G). Requires EF-Ts (tsf) for toxic function of the CT domain in vivo. In vitro the CT tRNase activity requires both EF-Tu (tufA) and EF-Ts. EF-Ts probably increases steady-state GTP-EF-Tu-aa-tRNA substrate levels. The CT domain is thought to remodel this same complex to displace the 3'-end of the aa-tRNA and allow it to enter into the toxin active site. The CT domain gains access to the cytoplasm of target cells by using integral inner membrane protein PTS system glucose-specific EIICB component (ptsG). Its function is as follows. The CdiA protein is thought to be exported from the cell through the central lumen of CdiB, the other half of its two-partner system (TPS). The TPS domain probably remains associated with CdiB while the FHA-1 domain forms an extended filament with the receptor-binding domain (RBD) at its extremity; in the secretion arrested state the C-terminus of the RBD and YP domains form a hairpin-like structure as the FHA-2, PT and CT domains are periplasmic. The YP domain is probably responsible for this arrest at the point where it re-enters the host cell periplasm. Upon binding to a target cell outer membrane receptor a signal is transmitted to activate secretion. The filament elongates slightly, the rest of CdiA is secreted and the FHA-2 domain becomes stably associated with the target cell's outer membrane where it facilitates entry of the toxic CT domain into the target cell periplasm. From there the toxic CT domain is cleaved and gains access to the target cell cytoplasm via an inner membrane protein (PtsG for this CDI). The protein is tRNA nuclease CdiA of Escherichia coli (strain NC101).